The primary structure comprises 483 residues: Membrane-bound lytic murein transglycosylase F (483 aa).

A signal peptide spans Met1 to Ala18. The tract at residues Trp19–Leu267 is non-LT domain. Residues His269 to Glu483 form an LT domain region. Glu312 is an active-site residue. The segment at Gln459–Glu483 is disordered. The span at Ile473–Glu483 shows a compositional bias: basic and acidic residues.

The protein in the N-terminal section; belongs to the bacterial solute-binding protein 3 family. It in the C-terminal section; belongs to the transglycosylase Slt family.

The protein localises to the cell outer membrane. The enzyme catalyses Exolytic cleavage of the (1-&gt;4)-beta-glycosidic linkage between N-acetylmuramic acid (MurNAc) and N-acetylglucosamine (GlcNAc) residues in peptidoglycan, from either the reducing or the non-reducing ends of the peptidoglycan chains, with concomitant formation of a 1,6-anhydrobond in the MurNAc residue.. In terms of biological role, murein-degrading enzyme that degrades murein glycan strands and insoluble, high-molecular weight murein sacculi, with the concomitant formation of a 1,6-anhydromuramoyl product. Lytic transglycosylases (LTs) play an integral role in the metabolism of the peptidoglycan (PG) sacculus. Their lytic action creates space within the PG sacculus to allow for its expansion as well as for the insertion of various structures such as secretion systems and flagella. This Actinobacillus pleuropneumoniae serotype 7 (strain AP76) protein is Membrane-bound lytic murein transglycosylase F.